The primary structure comprises 724 residues: Propionyl-CoA carboxylase alpha chain, mitochondrial (724 aa).

Residues 1–48 constitute a mitochondrion transit peptide; that stretch reads MAGQWVRTVALLAARRHWRRSSQQQLLGTLKHAPVYSYQCLVVSRSLS. The Biotin carboxylation domain occupies 58 to 505; the sequence is TFDKILIANR…STKFLSDVYP (448 aa). Lys-61 is modified (N6-acetyllysine; alternate). N6-succinyllysine; alternate is present on Lys-61. Residue Lys-115 is modified to N6-succinyllysine. Lys-146 carries the N6-acetyllysine; alternate modification. At Lys-146 the chain carries N6-succinyllysine; alternate. Lys-150 bears the N6-acetyllysine mark. Residue Lys-173 coordinates ATP. An ATP-grasp domain is found at 177–374; that stretch reads KLLAKRAKVN…LVQEMILVAK (198 aa). The residue at position 184 (Lys-184) is an N6-succinyllysine. Residue Lys-196 is modified to N6-acetyllysine; alternate. Lys-196 is modified (N6-succinyllysine; alternate). ATP is bound by residues 205-266, Glu-257, and Asn-292; that span reads AREI…PRHI. Phosphoserine is present on Ser-248. N6-succinyllysine is present on Lys-258. Lys-324 bears the N6-acetyllysine; alternate mark. Residue Lys-324 is modified to N6-succinyllysine; alternate. Glu-332, Glu-345, and Asn-347 together coordinate Mg(2+). The Mn(2+) site is built by Glu-332, Glu-345, and Asn-347. Residue Arg-349 is part of the active site. Lys-381 and Lys-403 each carry N6-succinyllysine. Phe-405 contacts biotin. An N6-acetyllysine modification is found at Lys-492. An N6-succinyllysine mark is found at Lys-498, Lys-509, Lys-554, and Lys-644. Positions 645–724 constitute a Biotinyl-binding domain; it reads FMLEKVPKDT…GEGDLLVELE (80 aa). Position 690 is an N6-biotinyllysine; by HLCS (Lys-690).

As to quaternary structure, the holoenzyme is a dodecamer composed of 6 PCCA/alpha subunits and 6 PCCB/beta subunits. Interacts (via the biotin carboxylation domain) with SIRT4. Interacts with SIRT3 and SIRT5. Mg(2+) is required as a cofactor. It depends on Mn(2+) as a cofactor. Requires biotin as cofactor. Acetylated. Post-translationally, the biotin cofactor is covalently attached to the C-terminal biotinyl-binding domain and is required for the catalytic activity. Biotinylation is catalyzed by HLCS.

The protein localises to the mitochondrion matrix. It carries out the reaction propanoyl-CoA + hydrogencarbonate + ATP = (S)-methylmalonyl-CoA + ADP + phosphate + H(+). It catalyses the reaction butanoyl-CoA + hydrogencarbonate + ATP = (2S)-ethylmalonyl-CoA + ADP + phosphate + H(+). Its pathway is metabolic intermediate metabolism; propanoyl-CoA degradation; succinyl-CoA from propanoyl-CoA: step 1/3. In terms of biological role, this is one of the 2 subunits of the biotin-dependent propionyl-CoA carboxylase (PCC), a mitochondrial enzyme involved in the catabolism of odd chain fatty acids, branched-chain amino acids isoleucine, threonine, methionine, and valine and other metabolites. Propionyl-CoA carboxylase catalyzes the carboxylation of propionyl-CoA/propanoyl-CoA to D-methylmalonyl-CoA/(S)-methylmalonyl-CoA. Within the holoenzyme, the alpha subunit catalyzes the ATP-dependent carboxylation of the biotin carried by the biotin carboxyl carrier (BCC) domain, while the beta subunit then transfers the carboxyl group from carboxylated biotin to propionyl-CoA. Propionyl-CoA carboxylase also significantly acts on butyryl-CoA/butanoyl-CoA, which is converted to ethylmalonyl-CoA/(2S)-ethylmalonyl-CoA. Other alternative minor substrates include (2E)-butenoyl-CoA/crotonoyl-CoA. In Mus musculus (Mouse), this protein is Propionyl-CoA carboxylase alpha chain, mitochondrial.